Here is a 268-residue protein sequence, read N- to C-terminus: ELL-associated factor 1 (268 aa).

The segment at 106-268 (IQVKKTRAEG…LSESGSDSDD (163 aa)) is disordered. The segment covering 128–154 (ARPPQPSQPPPPPPPMPFRAPTKPPAG) has biased composition (pro residues). At serine 165 the chain carries Phosphoserine. The segment covering 171-181 (DDIKRELRAEV) has biased composition (basic and acidic residues). The tract at residues 182–262 (DIIEQMSSSS…LRNDLQLSES (81 aa)) is necessary for transactivation activity. The span at 188-203 (SSSSGSSSSDSESSSG) shows a compositional bias: low complexity. Residues 238-268 (NGTSRPQGSSQLMNTLRNDLQLSESGSDSDD) show a composition bias toward polar residues.

This sequence belongs to the EAF family. In terms of assembly, component of the super elongation complex (SEC), at least composed of EAF1, EAF2, CDK9, MLLT3/AF9, AFF (AFF1 or AFF4), the P-TEFb complex and ELL (ELL, ELL2 or ELL3). Interacts with ELL and ELL2.

It localises to the nucleus speckle. The protein localises to the nucleus. The protein resides in the cajal body. Functionally, acts as a transcriptional transactivator of ELL and ELL2 elongation activities. The chain is ELL-associated factor 1 (Eaf1) from Mus musculus (Mouse).